We begin with the raw amino-acid sequence, 151 residues long: Ribosome maturation factor RimP (151 aa).

Belongs to the RimP family.

It is found in the cytoplasm. Functionally, required for maturation of 30S ribosomal subunits. The protein is Ribosome maturation factor RimP of Aliivibrio fischeri (strain ATCC 700601 / ES114) (Vibrio fischeri).